A 455-amino-acid chain; its full sequence is Bleomycin hydrolase (455 aa).

Methionine 1 carries the post-translational modification N-acetylmethionine. Active-site residues include cysteine 73 and histidine 372. Lysine 391 carries the N6-acetyllysine modification. Asparagine 396 is an active-site residue.

This sequence belongs to the peptidase C1 family. Homohexamer. Interacts with NUDT12 (via ANK repeats).

It is found in the cytoplasm. The protein resides in the cytoplasmic granule. The catalysed reaction is Inactivates bleomycin B2 (a cytotoxic glycometallopeptide) by hydrolysis of a carboxyamide bond of beta-aminoalanine, but also shows general aminopeptidase activity. The specificity varies somewhat with source, but amino acid arylamides of Met, Leu and Ala are preferred.. Its function is as follows. The normal physiological role of BLM hydrolase is unknown, but it catalyzes the inactivation of the antitumor drug BLM (a glycopeptide) by hydrolyzing the carboxamide bond of its B-aminoalaninamide moiety thus protecting normal and malignant cells from BLM toxicity. The sequence is that of Bleomycin hydrolase (BLMH) from Homo sapiens (Human).